The following is a 367-amino-acid chain: UDP-N-acetylglucosamine--N-acetylmuramyl-(pentapeptide) pyrophosphoryl-undecaprenol N-acetylglucosamine transferase (367 aa).

Residues 15–17, asparagine 127, arginine 163, serine 191, isoleucine 249, and glutamine 294 contribute to the UDP-N-acetyl-alpha-D-glucosamine site; that span reads TGG.

It belongs to the glycosyltransferase 28 family. MurG subfamily.

The protein localises to the cell inner membrane. The enzyme catalyses di-trans,octa-cis-undecaprenyl diphospho-N-acetyl-alpha-D-muramoyl-L-alanyl-D-glutamyl-meso-2,6-diaminopimeloyl-D-alanyl-D-alanine + UDP-N-acetyl-alpha-D-glucosamine = di-trans,octa-cis-undecaprenyl diphospho-[N-acetyl-alpha-D-glucosaminyl-(1-&gt;4)]-N-acetyl-alpha-D-muramoyl-L-alanyl-D-glutamyl-meso-2,6-diaminopimeloyl-D-alanyl-D-alanine + UDP + H(+). It participates in cell wall biogenesis; peptidoglycan biosynthesis. Functionally, cell wall formation. Catalyzes the transfer of a GlcNAc subunit on undecaprenyl-pyrophosphoryl-MurNAc-pentapeptide (lipid intermediate I) to form undecaprenyl-pyrophosphoryl-MurNAc-(pentapeptide)GlcNAc (lipid intermediate II). The protein is UDP-N-acetylglucosamine--N-acetylmuramyl-(pentapeptide) pyrophosphoryl-undecaprenol N-acetylglucosamine transferase of Burkholderia vietnamiensis (strain G4 / LMG 22486) (Burkholderia cepacia (strain R1808)).